A 788-amino-acid polypeptide reads, in one-letter code: Protein translocase subunit SecA (788 aa).

ATP is bound by residues Gln85, 103–107 (GEGKT), and Asp494.

It belongs to the SecA family. In terms of assembly, monomer and homodimer. Part of the essential Sec protein translocation apparatus which comprises SecA, SecYEG and auxiliary proteins SecDF. Other proteins may also be involved.

It localises to the cell membrane. It is found in the cytoplasm. It carries out the reaction ATP + H2O + cellular proteinSide 1 = ADP + phosphate + cellular proteinSide 2.. Functionally, part of the Sec protein translocase complex. Interacts with the SecYEG preprotein conducting channel. Has a central role in coupling the hydrolysis of ATP to the transfer of proteins into and across the cell membrane, serving as an ATP-driven molecular motor driving the stepwise translocation of polypeptide chains across the membrane. The sequence is that of Protein translocase subunit SecA from Oenococcus oeni (strain ATCC BAA-331 / PSU-1).